The primary structure comprises 355 residues: Probable F-box protein At5g36000 (355 aa).

Residues 1–14 (MNTRSGDAEGDIRG) are compositionally biased toward basic and acidic residues. Residues 1–44 (MNTRSGDAEGDIRGKMIAPVRDGNGGQKRKLVQSNDIQRDEDGG) are disordered. The 47-residue stretch at 78–124 (QSRFSWYEQDIWTYITRFLDGKSLVKLGATNKWFYKIAMEDTVWRFA) folds into the F-box; degenerate domain.

The sequence is that of Probable F-box protein At5g36000 from Arabidopsis thaliana (Mouse-ear cress).